A 126-amino-acid polypeptide reads, in one-letter code: 13 kDa ribonucleoprotein-associated protein (126 aa).

This sequence belongs to the eukaryotic ribosomal protein eL8 family. As to quaternary structure, component of the U3 snoRNP particle. Binds to the C'/D and B/C motifs in U3 snoRNA. Component of the 25S U4/U6.U5 tri-snRNP particle, a subcomplex of the spliceosome. Binds to the 5' stem-loop of U4 snRNA.

It is found in the nucleus. Its subcellular location is the nucleolus. In terms of biological role, common component of the spliceosome and rRNA processing machinery. In association with the spliceosomal U4/U6.U5 tri-snRNP particle, required for splicing of pre-mRNA. In association with box C/D snoRNPs, required for processing of pre-ribosomal RNA (rRNA) and site-specific 2'-O-methylation of substrate RNAs. Essential for the accumulation and stability of U4 snRNA, U6 snRNA, and box C/D snoRNAs. This is 13 kDa ribonucleoprotein-associated protein (SNU13) from Kluyveromyces lactis (strain ATCC 8585 / CBS 2359 / DSM 70799 / NBRC 1267 / NRRL Y-1140 / WM37) (Yeast).